The chain runs to 329 residues: DNA-directed RNA polymerase subunit alpha (329 aa).

An alpha N-terminal domain (alpha-NTD) region spans residues 1-235 (MQGSVTEFLK…EQLDAFVDLR (235 aa)). The tract at residues 249-329 (FDPILLRPVD…NWPPASIAED (81 aa)) is alpha C-terminal domain (alpha-CTD).

The protein belongs to the RNA polymerase alpha chain family. In terms of assembly, homodimer. The RNAP catalytic core consists of 2 alpha, 1 beta, 1 beta' and 1 omega subunit. When a sigma factor is associated with the core the holoenzyme is formed, which can initiate transcription.

The catalysed reaction is RNA(n) + a ribonucleoside 5'-triphosphate = RNA(n+1) + diphosphate. Functionally, DNA-dependent RNA polymerase catalyzes the transcription of DNA into RNA using the four ribonucleoside triphosphates as substrates. This Actinobacillus pleuropneumoniae serotype 5b (strain L20) protein is DNA-directed RNA polymerase subunit alpha.